The following is a 311-amino-acid chain: Putative mitochondrial transporter UCP3 (311 aa).

The Mitochondrial intermembrane segment spans residues 1–10 (MVGLKPSEVP). A helical membrane pass occupies residues 11-32 (PTTAVKFLGAGTAACFADLLTF). Solcar repeat units lie at residues 11-105 (PTTA…VKQF), 114-205 (SSIT…IKEK), and 214-299 (DNFP…LKRA). Residues 33–76 (PLDTAKVRLQIQGENQATQAARRIQYRGVLGTILTMVRTEGPRS) lie on the Mitochondrial matrix side of the membrane. Residues 77–99 (PYNGLVAGLQRQMSFASIRIGLY) form a helical membrane-spanning segment. The Mitochondrial intermembrane segment spans residues 100–119 (DSVKQFYTPKGSDHSSITTR). The chain crosses the membrane as a helical span at residues 120 to 136 (ILAGCTTGAMAVSCAQP). The Mitochondrial matrix segment spans residues 137–182 (TDVVKVRFQASIHLGAGSNRKYSGTMDAYRTIAREEGVRGLWKGTL). The helical transmembrane segment at 183-199 (PNITRNAIVNCAEMVTY) threads the bilayer. Topologically, residues 200 to 216 (DIIKEKLLDYHLLTDNF) are mitochondrial intermembrane. Residues 217–236 (PCHLISAFGAGFCATVVASP) form a helical membrane-spanning segment. Over 237–270 (VDVVKTRYMNSPPGQYCSPLDCMLKMVTQEGPTA) the chain is Mitochondrial matrix. The chain crosses the membrane as a helical span at residues 271 to 293 (FYKGFTPSFLRLGTWNVVMFVTY). The tract at residues 278–300 (SFLRLGTWNVVMFVTYEQLKRAL) is purine nucleotide binding. The Mitochondrial intermembrane portion of the chain corresponds to 294-311 (EQLKRALMKVQMLRESPF).

Belongs to the mitochondrial carrier (TC 2.A.29) family. As to quaternary structure, interacts with HAX1; the interaction is direct and calcium-dependent.

The protein resides in the mitochondrion inner membrane. In terms of biological role, putative transmembrane transporter that plays a role in mitochondrial metabolism via an as yet unclear mechanism. Originally, this mitochondrial protein was thought to act as a proton transmembrane transporter from the mitochondrial intermembrane space into the matrix, causing proton leaks through the inner mitochondrial membrane, thereby uncoupling mitochondrial membrane potential generation from ATP synthesis. However, this function is controversial and uncoupling may not be the function, or at least not the main function, but rather a consequence of more conventional metabolite transporter activity. The protein is Putative mitochondrial transporter UCP3 of Canis lupus familiaris (Dog).